The chain runs to 232 residues: Phosphatidylserine decarboxylase proenzyme (232 aa).

The Schiff-base intermediate with substrate; via pyruvic acid role is filled by Ser190. Ser190 carries the post-translational modification Pyruvic acid (Ser); by autocatalysis.

This sequence belongs to the phosphatidylserine decarboxylase family. PSD-A subfamily. Heterodimer of a large membrane-associated beta subunit and a small pyruvoyl-containing alpha subunit. The cofactor is pyruvate. Is synthesized initially as an inactive proenzyme. Formation of the active enzyme involves a self-maturation process in which the active site pyruvoyl group is generated from an internal serine residue via an autocatalytic post-translational modification. Two non-identical subunits are generated from the proenzyme in this reaction, and the pyruvate is formed at the N-terminus of the alpha chain, which is derived from the carboxyl end of the proenzyme. The post-translation cleavage follows an unusual pathway, termed non-hydrolytic serinolysis, in which the side chain hydroxyl group of the serine supplies its oxygen atom to form the C-terminus of the beta chain, while the remainder of the serine residue undergoes an oxidative deamination to produce ammonia and the pyruvoyl prosthetic group on the alpha chain.

It is found in the cell membrane. It carries out the reaction a 1,2-diacyl-sn-glycero-3-phospho-L-serine + H(+) = a 1,2-diacyl-sn-glycero-3-phosphoethanolamine + CO2. Its pathway is phospholipid metabolism; phosphatidylethanolamine biosynthesis; phosphatidylethanolamine from CDP-diacylglycerol: step 2/2. In terms of biological role, catalyzes the formation of phosphatidylethanolamine (PtdEtn) from phosphatidylserine (PtdSer). In Rhizobium johnstonii (strain DSM 114642 / LMG 32736 / 3841) (Rhizobium leguminosarum bv. viciae), this protein is Phosphatidylserine decarboxylase proenzyme.